A 217-amino-acid polypeptide reads, in one-letter code: MDVFERTEQNFQHVCNSITRRIKQLPNYGGEKKKIAVREVENDIDEALKFISEMEKLAQNHPQRIKLQTKTKQYHSDIQKYKREVQLAQLQSSNQTNSNPWSNAPDDYQSQYDNQRQHLLQGSNMLDSTSDRLLRTHQISAQSEQIGQNILMDLGKQGEQIRGMRDKLHETDDQIKSARKIMTGIARRLATNKVILSIIILLLMGIIALIICLKWLR.

The Cytoplasmic portion of the chain corresponds to 1–192 (MDVFERTEQN…TGIARRLATN (192 aa)). Residues 36-97 (AVREVENDID…AQLQSSNQTN (62 aa)) adopt a coiled-coil conformation. The segment at 90-109 (LQSSNQTNSNPWSNAPDDYQ) is disordered. A t-SNARE coiled-coil homology domain is found at 123 to 185 (SNMLDSTSDR…KSARKIMTGI (63 aa)). Residues 193 to 213 (KVILSIIILLLMGIIALIICL) form a helical; Anchor for type IV membrane protein membrane-spanning segment. At 214 to 217 (KWLR) the chain is on the vesicular side.

This sequence belongs to the VTI1 family. As to quaternary structure, component of the SNARE complex composed of syn7A, syn8A, vamp7A and vti1A.

The protein localises to the membrane. The protein resides in the cytoplasmic vesicle. It is found in the secretory vesicle membrane. It localises to the clathrin-coated vesicle membrane. Its subcellular location is the endosome membrane. The protein localises to the endoplasmic reticulum membrane. Functionally, V-SNARE that mediates vesicle transport pathways through interactions with t-SNAREs on the target membrane. These interactions are proposed to mediate aspects of the specificity of vesicle trafficking and to promote fusion of the lipid bilayers. This Dictyostelium discoideum (Social amoeba) protein is Vesicle transport through interaction with t-SNAREs homolog 1A.